The sequence spans 71 residues: UPF0346 protein BCB4264_A2283 (71 aa).

The protein belongs to the UPF0346 family.

The chain is UPF0346 protein BCB4264_A2283 from Bacillus cereus (strain B4264).